The primary structure comprises 679 residues: UvrABC system protein B (679 aa).

Residues 25 to 176 (EGVNGGERYQ…NLRGSLRDLV (152 aa)) enclose the Helicase ATP-binding domain. Residue 38–45 (GATGTGKT) participates in ATP binding. Positions 91–114 (YYDYYQPEAYVPVSDTYIAKTASI) match the Beta-hairpin motif. The region spanning 429–591 (QVDDLLGEIR…ITPTAAGKKA (163 aa)) is the Helicase C-terminal domain. Residues 638–673 (PELIDQLELKMKESAKKLDFEEAANLRDRIKKLRQK) enclose the UVR domain.

Belongs to the UvrB family. Forms a heterotetramer with UvrA during the search for lesions. Interacts with UvrC in an incision complex.

It is found in the cytoplasm. Functionally, the UvrABC repair system catalyzes the recognition and processing of DNA lesions. A damage recognition complex composed of 2 UvrA and 2 UvrB subunits scans DNA for abnormalities. Upon binding of the UvrA(2)B(2) complex to a putative damaged site, the DNA wraps around one UvrB monomer. DNA wrap is dependent on ATP binding by UvrB and probably causes local melting of the DNA helix, facilitating insertion of UvrB beta-hairpin between the DNA strands. Then UvrB probes one DNA strand for the presence of a lesion. If a lesion is found the UvrA subunits dissociate and the UvrB-DNA preincision complex is formed. This complex is subsequently bound by UvrC and the second UvrB is released. If no lesion is found, the DNA wraps around the other UvrB subunit that will check the other stand for damage. The polypeptide is UvrABC system protein B (Synechococcus sp. (strain CC9311)).